Reading from the N-terminus, the 360-residue chain is Methyltransferase pvhD (360 aa).

Residues 201 to 202 (SG), aspartate 227, 251 to 252 (DL), arginine 267, and arginine 268 contribute to the S-adenosyl-L-methionine site.

It belongs to the class I-like SAM-binding methyltransferase superfamily. Cation-independent O-methyltransferase family.

It functions in the pathway secondary metabolite biosynthesis. Its function is as follows. Methyltransferase; part of the gene cluster that mediates the biosynthesis of varicidin A, an antifungal natural product containing a cis-octahydrodecalin core. The PKS module of pvhA together with the enoylreductase pvhC catalyze the formation of the polyketide unit which is then conjugated to L-isoleucine by the condensation domain of the NRPS module. Activity of the Dieckmann cyclase domain (RED) of pvhA results in release of an acyclic tetramate. The cytochrome P450 monooxygenase pvhE then catalyzes the oxidation of the C21 methyl group to a to carboxylate group. The methyltransferase pvhD then further methylates the pvhE product. The Diels-Alderase pvhB is able to catalyze Diels-Alder cycloaddition using both pvhE and pvhD products as substrates to form the decalin ring, yielding varicidin B and A, respectively. This Talaromyces variabilis (Penicillium variabile) protein is Methyltransferase pvhD.